A 570-amino-acid chain; its full sequence is MTEPIISFKDFSFQYHSQATPTLQNINVDIYPGEKVLVVGASGSGKSTFANCINGLIPFKTKGNITGELYINNQDATVSCLHDRSNVVGTVLQDTDGQFIGLTAAEDMAFLLENNCVEQDDMKKNVSYWAEKVGMIEHLNHRPQDLSGGQKQRVSLGGILIHRTPILILDEPLANLDPATGHETLRLLNNIHEETKSTMIIVEHRLEESLDDTFDRVLLFKDGKIIANTTPSDLLKSSKLKEAGIREPLYCTALKYAEVDVESIDNLANLRDVCMSEHVKFKVKKWIDETSANNDNKYKSEPLLELNEVCVQYSDYSNSVLNNVQLNVYRREMLSIVGHNGAGKSTLAKAICGFLDITGNIQFCNRGFNQLSISERSEFVGYVMQNPNHMISEKMIYDEVALGLRARGMKESDIKIRVENVLKICGLYAFRNWPIAALSYGQKKRVTIASVLVLNPEIIILDEPTAGQDFYHYNEIMSFLIELNRQGKTIIMITHDMHLLSEYSSRTVVLSKGQVVADTTPVLILNDKKICEIASLRQTSLFEMAEYIGISEPQKLVQLFINHDRKVRRQ.

ABC transporter domains are found at residues 6 to 247 (ISFK…GIRE) and 304 to 537 (LELN…ASLR). ATP-binding positions include 40–47 (GASGSGKS) and 338–345 (GHNGAGKS).

It belongs to the ABC transporter superfamily.

The protein resides in the cell membrane. Functionally, probably part of an ABC transporter complex. Responsible for energy coupling to the transport system. In Staphylococcus aureus (strain Mu50 / ATCC 700699), this protein is Putative ABC transporter ATP-binding protein SAV2684.